A 374-amino-acid polypeptide reads, in one-letter code: Aminomethyltransferase (374 aa).

The protein belongs to the GcvT family. In terms of assembly, the glycine cleavage system is composed of four proteins: P, T, L and H.

It catalyses the reaction N(6)-[(R)-S(8)-aminomethyldihydrolipoyl]-L-lysyl-[protein] + (6S)-5,6,7,8-tetrahydrofolate = N(6)-[(R)-dihydrolipoyl]-L-lysyl-[protein] + (6R)-5,10-methylene-5,6,7,8-tetrahydrofolate + NH4(+). In terms of biological role, the glycine cleavage system catalyzes the degradation of glycine. This chain is Aminomethyltransferase, found in Edwardsiella ictaluri (strain 93-146).